The following is a 170-amino-acid chain: Peptide deformylase (170 aa).

Fe cation is bound by residues cysteine 94 and histidine 136. The active site involves glutamate 137. Residue histidine 140 participates in Fe cation binding.

Belongs to the polypeptide deformylase family. Fe(2+) is required as a cofactor.

It carries out the reaction N-terminal N-formyl-L-methionyl-[peptide] + H2O = N-terminal L-methionyl-[peptide] + formate. In terms of biological role, removes the formyl group from the N-terminal Met of newly synthesized proteins. Requires at least a dipeptide for an efficient rate of reaction. N-terminal L-methionine is a prerequisite for activity but the enzyme has broad specificity at other positions. The polypeptide is Peptide deformylase (Agrobacterium fabrum (strain C58 / ATCC 33970) (Agrobacterium tumefaciens (strain C58))).